The sequence spans 382 residues: Anhydro-N-acetylmuramic acid kinase (382 aa).

22–29 lines the ATP pocket; the sequence is GTSMDGVD.

It belongs to the anhydro-N-acetylmuramic acid kinase family.

It carries out the reaction 1,6-anhydro-N-acetyl-beta-muramate + ATP + H2O = N-acetyl-D-muramate 6-phosphate + ADP + H(+). The protein operates within amino-sugar metabolism; 1,6-anhydro-N-acetylmuramate degradation. It functions in the pathway cell wall biogenesis; peptidoglycan recycling. Functionally, catalyzes the specific phosphorylation of 1,6-anhydro-N-acetylmuramic acid (anhMurNAc) with the simultaneous cleavage of the 1,6-anhydro ring, generating MurNAc-6-P. Is required for the utilization of anhMurNAc either imported from the medium or derived from its own cell wall murein, and thus plays a role in cell wall recycling. The sequence is that of Anhydro-N-acetylmuramic acid kinase from Burkholderia orbicola (strain AU 1054).